The chain runs to 132 residues: MSMTDPIADMLTRIRNANMARLQKVDIPSSNLKVNLANVLKAEGFIKNYKVIADSRQGVLRVYLKYIDEKDPVINEIKRVSKPGSRVYVGSDKIPSVKNGMGVAILSTSKGLITDKSAREAGVGGEVLCTVW.

The protein belongs to the universal ribosomal protein uS8 family. Part of the 30S ribosomal subunit. Contacts proteins S5 and S12.

Its function is as follows. One of the primary rRNA binding proteins, it binds directly to 16S rRNA central domain where it helps coordinate assembly of the platform of the 30S subunit. This is Small ribosomal subunit protein uS8 from Geobacter sulfurreducens (strain ATCC 51573 / DSM 12127 / PCA).